Consider the following 485-residue polypeptide: Glutamyl-tRNA(Gln) amidotransferase subunit A (485 aa).

Residues Lys79 and Ser154 each act as charge relay system in the active site. Ser178 acts as the Acyl-ester intermediate in catalysis.

The protein belongs to the amidase family. GatA subfamily. Heterotrimer of A, B and C subunits.

The catalysed reaction is L-glutamyl-tRNA(Gln) + L-glutamine + ATP + H2O = L-glutaminyl-tRNA(Gln) + L-glutamate + ADP + phosphate + H(+). Functionally, allows the formation of correctly charged Gln-tRNA(Gln) through the transamidation of misacylated Glu-tRNA(Gln) in organisms which lack glutaminyl-tRNA synthetase. The reaction takes place in the presence of glutamine and ATP through an activated gamma-phospho-Glu-tRNA(Gln). In Bacillus velezensis (strain DSM 23117 / BGSC 10A6 / LMG 26770 / FZB42) (Bacillus amyloliquefaciens subsp. plantarum), this protein is Glutamyl-tRNA(Gln) amidotransferase subunit A.